The primary structure comprises 317 residues: Olfactory receptor 5K16 (317 aa).

The Extracellular segment spans residues 1-28 (MEKTNHSLTTQFILVGFSDHPDLKTPLF). N-linked (GlcNAc...) asparagine glycosylation occurs at asparagine 5. Residues 29-49 (LLFSVIYLVTMVGNLGLVAVI) traverse the membrane as a helical segment. At 50–56 (YLEPRLH) the chain is on the cytoplasmic side. A helical membrane pass occupies residues 57–77 (TPMYIFLGNLALMDSCCSCAI). Topologically, residues 78–93 (TPKILENFFSVDRRIS) are extracellular. A helical transmembrane segment spans residues 94 to 114 (LYECMAQFYFLCLAETADCFL). An intrachain disulfide couples cysteine 97 to cysteine 189. Over 115-144 (LAAMAYDRYVAICNPLQYHSMMSKKLSIQM) the chain is Cytoplasmic. The helical transmembrane segment at 145–165 (SIGTFITSNLHSLIHVGCLLR) threads the bilayer. Residues 166–198 (LTFCKSNRIDHFFCDILPLYRLSCTDPFINELM) are Extracellular-facing. Residues 199 to 219 (IYIFSMPIQVFTITTVLVSYF) form a helical membrane-spanning segment. Over 220-239 (CILLTIFKMKSKDGRGKAFS) the chain is Cytoplasmic. The helical transmembrane segment at 240–259 (TCASHFFSVSIFYVCLLMYI) threads the bilayer. Residues 260 to 268 (RPFDEGNKD) are Extracellular-facing. Residues 269–289 (IPVAVFYTIIIPLLNPFIYSL) traverse the membrane as a helical segment. The Cytoplasmic segment spans residues 290-317 (RNKEVVNAVKKVMKTHSIFKNASASMAR).

This sequence belongs to the G-protein coupled receptor 1 family.

The protein resides in the cell membrane. Potential odorant receptor. This Mus musculus (Mouse) protein is Olfactory receptor 5K16.